Here is a 51-residue protein sequence, read N- to C-terminus: MREYPNGEKTHLTVMAAGFPSLTGDHKVIYVAADRHVTSEEILEAAIRLLS.

This is an uncharacterized protein from Escherichia coli (strain K12).